A 378-amino-acid chain; its full sequence is Quinolinate synthase (378 aa).

Iminosuccinate-binding residues include H59 and S80. C125 contacts [4Fe-4S] cluster. Residues 151 to 153 (YAN) and S168 each bind iminosuccinate. Position 212 (C212) interacts with [4Fe-4S] cluster. Residues 238–240 (HPE) and T255 each bind iminosuccinate. C309 is a binding site for [4Fe-4S] cluster.

It belongs to the quinolinate synthase family. Type 1 subfamily. It depends on [4Fe-4S] cluster as a cofactor.

Its subcellular location is the cytoplasm. It catalyses the reaction iminosuccinate + dihydroxyacetone phosphate = quinolinate + phosphate + 2 H2O + H(+). It participates in cofactor biosynthesis; NAD(+) biosynthesis; quinolinate from iminoaspartate: step 1/1. Catalyzes the condensation of iminoaspartate with dihydroxyacetone phosphate to form quinolinate. This chain is Quinolinate synthase, found in Burkholderia mallei (strain NCTC 10247).